Here is a 56-residue protein sequence, read N- to C-terminus: Large ribosomal subunit protein bL32 (56 aa).

Residues 1–16 (MAVQKSKKSRAARGMR) show a composition bias toward basic residues. The segment at 1–22 (MAVQKSKKSRAARGMRRSHDAL) is disordered.

The protein belongs to the bacterial ribosomal protein bL32 family.

This Photobacterium profundum (strain SS9) protein is Large ribosomal subunit protein bL32.